We begin with the raw amino-acid sequence, 8892 residues long: Nonribosomal peptide synthetase 32 (8892 aa).

The region spanning 12-85 is the Carrier 1 domain; that stretch reads EPSKLVLGRV…QLAESIAQQN (74 aa). Position 46 is an O-(pantetheine 4'-phosphoryl)serine (serine 46). A disordered region spans residues 88–112; it reads AGNGVNGHANGNGMNGNGLHNEATI. The segment covering 93-108 has biased composition (low complexity); it reads NGHANGNGMNGNGLHN. The tract at residues 567 to 956 is condensation 1; sequence PTSANVPRRV…EGVDLSVRDF (390 aa). The segment at 989–1386 is adenylation 1; sequence KMAEQPEALA…GRIDSQIKIR (398 aa). Residues 1523 to 1599 enclose the Carrier 2 domain; sequence ISATAVEREL…ELAAEVQATQ (77 aa). O-(pantetheine 4'-phosphoryl)serine is present on serine 1560. An epimerization 1 region spans residues 1609-2039; sequence GAIALSPIQQ…YGQTVKSLVN (431 aa). A condensation 2 region spans residues 2083–2518; it reads EDILPCSPIQ…LLLPAEEAKL (436 aa). The adenylation 2 stretch occupies residues 2543–2934; the sequence is SQPEALAVSA…GRRDTQVKIR (392 aa). The 77-residue stretch at 3061 to 3137 folds into the Carrier 3 domain; it reads SSATPIEREL…ELAANSQTGR (77 aa). At serine 3098 the chain carries O-(pantetheine 4'-phosphoryl)serine. The tract at residues 3153 to 3590 is epimerization 2; the sequence is LSPIQQMFFD…GDTVKTLVEE (438 aa). The condensation 3 stretch occupies residues 3634-4061; the sequence is EDILPCSAIQ…NVDRPLRELT (428 aa). The segment at 4098-4488 is adenylation 3; the sequence is TLPEALAISS…GRIDSQIKIR (391 aa). The 77-residue stretch at 4627-4703 folds into the Carrier 4 domain; that stretch reads APTTDLERKL…DLSRVVEEKC (77 aa). The residue at position 4664 (serine 4664) is an O-(pantetheine 4'-phosphoryl)serine. The condensation 4 stretch occupies residues 4760–5181; the sequence is EDVYPCSPMQ…LLTDEDCDQL (422 aa). The adenylation 4 stretch occupies residues 5205–5605; sequence TSYPTAPAIS…GRRDTQVKIR (401 aa). Residues 5745 to 5821 enclose the Carrier 5 domain; that stretch reads MPTTPMEQKL…DLAEAMEEKG (77 aa). At serine 5782 the chain carries O-(pantetheine 4'-phosphoryl)serine. A condensation 5 region spans residues 5868–6285; the sequence is EDVYPCSPLQ…LLSPGQMAQI (418 aa). An adenylation 5 region spans residues 6307-6700; the sequence is QMTTRPAATA…GRIDTQIKIR (394 aa). Positions 6834–6911 constitute a Carrier 6 domain; sequence ELTTTIERQL…ELATQTQTTE (78 aa). Serine 6872 bears the O-(pantetheine 4'-phosphoryl)serine mark. The segment at 6923 to 7360 is epimerization 3; that stretch reads NFQLSPIQQM…SYSCAIESLV (438 aa). Positions 7403–7834 are condensation 6; that stretch reads VQDILPCSPI…LLPAGDANQI (432 aa). The interval 7855 to 8253 is adenylation 6; that stretch reads QQMAAHPTAQ…LDRIGTQVKI (399 aa). The Carrier 7 domain occupies 8380-8456; sequence APVGRNEEIL…AMAARVTADI (77 aa). Serine 8417 carries the O-(pantetheine 4'-phosphoryl)serine modification. The tract at residues 8490–8878 is condensation 7; that stretch reads HFAFDATGPC…EIIEDSGCNV (389 aa).

Belongs to the NRP synthetase family.

It functions in the pathway secondary metabolite biosynthesis. In terms of biological role, nonribosomal peptide synthetase; part of the gene cluster that mediates the biosynthesis of the lipopeptides W493 A and B. W493 A and B consist of six amino acid residues D-allo-thr, L-Ala, D-Ala, L-Gln, D-Tyr, and L-Val/L-Ile linked to a 3-hydroxy-4-methyltetradecanoic acid polyketide chain. The biosynthesis starts with formation of the linear polyketide chain by the highly reducing polyketide synthase PKS40. The gene cluster contains a putative acyl-CoA ligase (FPSE_09184) for formation of a CoA thioester polyketide. The thiol bond could be hydrolyzed by the putative thioesterase (FPSE_09186) and then accepted by the first T domain in module 1 of NRPS32. The second T domain is responsible for accepting a threonine, which is adenylated by the A domain and epimerized to the D-allo-threonine formed by the E domain. The five successive modules incorporate Ala, Ala, Gln, Tyr, and Val/Ile into the final product, which is released by cyclization. This chain is Nonribosomal peptide synthetase 32, found in Fusarium pseudograminearum (strain CS3096) (Wheat and barley crown-rot fungus).